The primary structure comprises 473 residues: MLILWTIPLFLLGAAQGKEVCYDNLGCFSDAEPWAGTAIRPLKLLPWSPEKINTRFLLYTNENPTAFQTLQLSDPSTIEASNFQVARKTRFIIHGFIDKGEENWVVDMCKNMFQVEEVNCICVDWKRGSQTTYTQAANNVRVVGAQVAQMIDILVRNFNYSASKVHLIGHSLGAHVAGEAGSRTPGLGRITGLDPVEANFEGTPEEVRLDPSDADFVDVIHTDAAPLIPFLGFGTNQMVGHFDFFPNGGQYMPGCKKNALSQIVDIDGIWSGTRDFVACNHLRSYKYYLESILNPDGFAAYPCASYRDFESNKCFPCPDQGCPQMGHYADKFANNTSVEPQKFFLNTGEAKNFARWRYRVSLTFSGRTVTGQVKVSLFGSNGNTRQCDIFRGIIKPGATHSNEFDAKLDVGTIEKVKFLWNNHVVNPSFPKVGAAKITVQKGEERTEHNFCSEETVREDILLTLLPCKTSDTM.

Residues 1 to 17 form the signal peptide; sequence MLILWTIPLFLLGAAQG. Intrachain disulfides connect cysteine 21–cysteine 27 and cysteine 109–cysteine 120. Serine 171 (nucleophile) is an active-site residue. Aspartate 194 (charge relay system) is an active-site residue. Residues glutamate 205, arginine 208, aspartate 210, and aspartate 213 each coordinate Ca(2+). Cysteine 255 and cysteine 279 form a disulfide bridge. Histidine 281 (charge relay system) is an active-site residue. 3 cysteine pairs are disulfide-bonded: cysteine 303–cysteine 314, cysteine 317–cysteine 322, and cysteine 451–cysteine 467. A PLAT domain is found at 356 to 467; sequence WRYRVSLTFS…EDILLTLLPC (112 aa).

Belongs to the AB hydrolase superfamily. Lipase family. In terms of tissue distribution, expressed in female, but not in male, lacrimal gland. Expressed in male and female sublingual gland and pancreas.

It localises to the secreted. Functionally, may function as inhibitor of dietary triglyceride digestion. Lacks detectable lipase activity (in vitro). This chain is Inactive pancreatic lipase-related protein 1 (Pnliprp1), found in Mus musculus (Mouse).